Reading from the N-terminus, the 723-residue chain is Aminodeoxychorismate synthase (723 aa).

Positions 2-195 constitute a Glutamine amidotransferase type-1 domain; sequence RTLLVDNYDS…RDLTERHGRT (194 aa). Cys82 functions as the Nucleophile in the catalytic mechanism. Positions 96 to 117 are disordered; that stretch reads VGRAPEPRHGRTSAVRHDGTGL. Residues 98–114 show a composition bias toward basic and acidic residues; sequence RAPEPRHGRTSAVRHDG. Catalysis depends on residues His169 and Glu171. Disordered stretches follow at residues 192 to 219 and 693 to 723; these read HGRTRHGGRAGHGTLPPPAPARETKATT and FPGRERPGKDLDGEPDDGTDAGAPKDLVLPG. Residues 255 to 723 form a PABB component region; the sequence is LDSSRPGGEL…GAPKDLVLPG (469 aa). Residues 695-704 show a composition bias toward basic and acidic residues; sequence GRERPGKDLD.

This sequence in the C-terminal section; belongs to the anthranilate synthase component I family.

It carries out the reaction chorismate + L-glutamine = 4-amino-4-deoxychorismate + L-glutamate. The protein operates within antibiotic biosynthesis; candicidin biosynthesis. Involved in candicidin biosynthesis. Catalyzes the biosynthesis of 4-amino-4-deoxychorismate (ADC) from chorismate and glutamine. In Streptomyces griseus, this protein is Aminodeoxychorismate synthase.